Consider the following 800-residue polypeptide: Protein translocase subunit SecA (800 aa).

Residues Gln-85, 103–107, and Asp-504 each bind ATP; that span reads GEGKT.

This sequence belongs to the SecA family. Monomer and homodimer. Part of the essential Sec protein translocation apparatus which comprises SecA, SecYEG and auxiliary proteins SecDF. Other proteins may also be involved.

The protein localises to the cell membrane. It localises to the cytoplasm. The enzyme catalyses ATP + H2O + cellular proteinSide 1 = ADP + phosphate + cellular proteinSide 2.. In terms of biological role, part of the Sec protein translocase complex. Interacts with the SecYEG preprotein conducting channel. Has a central role in coupling the hydrolysis of ATP to the transfer of proteins into and across the cell membrane, serving as an ATP-driven molecular motor driving the stepwise translocation of polypeptide chains across the membrane. This chain is Protein translocase subunit SecA, found in Lactobacillus delbrueckii subsp. bulgaricus (strain ATCC 11842 / DSM 20081 / BCRC 10696 / JCM 1002 / NBRC 13953 / NCIMB 11778 / NCTC 12712 / WDCM 00102 / Lb 14).